A 134-amino-acid chain; its full sequence is Protein NrdI (134 aa).

This sequence belongs to the NrdI family.

In terms of biological role, probably involved in ribonucleotide reductase function. This is Protein NrdI from Rhizobium leguminosarum bv. trifolii (strain WSM2304).